An 822-amino-acid polypeptide reads, in one-letter code: LPS-assembly protein LptD (822 aa).

An N-terminal signal peptide occupies residues 1 to 37 (MRRASRSPFILSPVAHAVSRLVLCATLGWTYAGSGHA). A disordered region spans residues 38 to 97 (QVPAPAGGSEVPLGARPPASAPVAAQQETPLKLKSSPALAEEVPNGPGDEGPTFVFGDSV).

It belongs to the LptD family. In terms of assembly, component of the lipopolysaccharide transport and assembly complex. Interacts with LptE and LptA.

Its subcellular location is the cell outer membrane. Together with LptE, is involved in the assembly of lipopolysaccharide (LPS) at the surface of the outer membrane. The sequence is that of LPS-assembly protein LptD from Polaromonas sp. (strain JS666 / ATCC BAA-500).